We begin with the raw amino-acid sequence, 440 residues long: Thymidine phosphorylase (440 aa).

Belongs to the thymidine/pyrimidine-nucleoside phosphorylase family. As to quaternary structure, homodimer.

The enzyme catalyses thymidine + phosphate = 2-deoxy-alpha-D-ribose 1-phosphate + thymine. It functions in the pathway pyrimidine metabolism; dTMP biosynthesis via salvage pathway; dTMP from thymine: step 1/2. In terms of biological role, the enzymes which catalyze the reversible phosphorolysis of pyrimidine nucleosides are involved in the degradation of these compounds and in their utilization as carbon and energy sources, or in the rescue of pyrimidine bases for nucleotide synthesis. The chain is Thymidine phosphorylase from Klebsiella pneumoniae subsp. pneumoniae (strain ATCC 700721 / MGH 78578).